Here is a 7705-residue protein sequence, read N- to C-terminus: Copine family protein 2 (7705 aa).

9 disordered regions span residues 1–61 (MNDY…RHSE), 269–360 (KEGN…NNSQ), 372–408 (SERKTAKQREQELLQRSERRSGGRTHSHEEYRRHQQP), 464–492 (GDRAHLQYRPRAQKGAAGPTTRGAPTSSV), 506–538 (STEPSPVPSRRALPKSASLSSVQQKQPIKTADG), 560–614 (DERA…QGPP), 1301–1358 (NRSE…DQQV), 4381–4427 (ELEP…RSES), and 6779–6800 (RDEHHEHISETKSYPRDGGKFT). Residues 12–25 (SSQKSNNQKISNNS) show a composition bias toward low complexity. Positions 269-282 (KEGNNPSCCRERGT) are enriched in basic and acidic residues. Positions 302–313 (STSTKVAVTSAS) are enriched in low complexity. Basic residues predominate over residues 318-336 (IKDHKKQLKKEKEKKKKMD). Positions 372-404 (SERKTAKQREQELLQRSERRSGGRTHSHEEYRR) are enriched in basic and acidic residues. The span at 522-532 (ASLSSVQQKQP) shows a compositional bias: polar residues. The segment covering 560–587 (DERAKDFLRGDRSSRLSPQSERKNERQI) has biased composition (basic and acidic residues). Positions 588–597 (QIRQQSSGPT) are enriched in polar residues. Composition is skewed to basic and acidic residues over residues 598 to 611 (NRRETEIEYEEKRQ) and 1301 to 1335 (NRSELREMRSEEKRSNSMHHEESHYAHSSYEHTSE). The span at 4397 to 4409 (RQSRVYRSSSQVR) shows a compositional bias: low complexity. 2 stretches are compositionally biased toward basic and acidic residues: residues 4411–4427 (PSEESIQKTEALRRSES) and 6779–6797 (RDEHHEHISETKSYPRDGG). Residues 7475 to 7673 (NLIFGIDYTK…FHKVMFNAPN (199 aa)) enclose the VWFA domain.

This sequence belongs to the copine family. Expressed in body wall muscle.

This is Copine family protein 2 (cpna-2) from Caenorhabditis elegans.